We begin with the raw amino-acid sequence, 285 residues long: 3-methyl-2-oxobutanoate hydroxymethyltransferase (285 aa).

A disordered region spans residues 1 to 23 (MSEHNVYGAAQPAQPAQPAQPRT). Over residues 9–21 (AAQPAQPAQPAQP) the composition is skewed to low complexity. Positions 66 and 105 each coordinate Mg(2+). 3-methyl-2-oxobutanoate contacts are provided by residues 66 to 67 (DS), Asp105, and Lys135. A Mg(2+)-binding site is contributed by Glu137. Glu203 acts as the Proton acceptor in catalysis.

The protein belongs to the PanB family. Homodecamer; pentamer of dimers. Requires Mg(2+) as cofactor.

Its subcellular location is the cytoplasm. The catalysed reaction is 3-methyl-2-oxobutanoate + (6R)-5,10-methylene-5,6,7,8-tetrahydrofolate + H2O = 2-dehydropantoate + (6S)-5,6,7,8-tetrahydrofolate. The protein operates within cofactor biosynthesis; (R)-pantothenate biosynthesis; (R)-pantoate from 3-methyl-2-oxobutanoate: step 1/2. Its function is as follows. Catalyzes the reversible reaction in which hydroxymethyl group from 5,10-methylenetetrahydrofolate is transferred onto alpha-ketoisovalerate to form ketopantoate. The protein is 3-methyl-2-oxobutanoate hydroxymethyltransferase of Mycobacterium avium (strain 104).